A 469-amino-acid polypeptide reads, in one-letter code: Tetratricopeptide repeat protein 38 (469 aa).

A2 is modified (N-acetylalanine). The residue at position 5 (S5) is a Phosphoserine. TPR repeat units lie at residues 108–141, 180–213, and 252–285; these read REQLHVSAVETFANGNFPKACELWEQILQDHPTD, SYVKGIYSFGLMETNFYDQAEKLAKEALSINPTD, and CHNYWHWALYLIEKGEYEAALTIYDTHILPSLQA.

Belongs to the TTC38 family.

This Homo sapiens (Human) protein is Tetratricopeptide repeat protein 38 (TTC38).